We begin with the raw amino-acid sequence, 80 residues long: ATP synthase subunit c (80 aa).

A run of 2 helical transmembrane segments spans residues 11–31 and 53–73; these read IAAAMMMGLAAIGASIGIGIL and FFIVMGLVDAIPMIAVGLGLY.

This sequence belongs to the ATPase C chain family. F-type ATPases have 2 components, F(1) - the catalytic core - and F(0) - the membrane proton channel. F(1) has five subunits: alpha(3), beta(3), gamma(1), delta(1), epsilon(1). F(0) has three main subunits: a(1), b(2) and c(10-14). The alpha and beta chains form an alternating ring which encloses part of the gamma chain. F(1) is attached to F(0) by a central stalk formed by the gamma and epsilon chains, while a peripheral stalk is formed by the delta and b chains.

The protein resides in the cell inner membrane. Functionally, f(1)F(0) ATP synthase produces ATP from ADP in the presence of a proton or sodium gradient. F-type ATPases consist of two structural domains, F(1) containing the extramembraneous catalytic core and F(0) containing the membrane proton channel, linked together by a central stalk and a peripheral stalk. During catalysis, ATP synthesis in the catalytic domain of F(1) is coupled via a rotary mechanism of the central stalk subunits to proton translocation. Its function is as follows. Key component of the F(0) channel; it plays a direct role in translocation across the membrane. A homomeric c-ring of between 10-14 subunits forms the central stalk rotor element with the F(1) delta and epsilon subunits. In Aeromonas hydrophila subsp. hydrophila (strain ATCC 7966 / DSM 30187 / BCRC 13018 / CCUG 14551 / JCM 1027 / KCTC 2358 / NCIMB 9240 / NCTC 8049), this protein is ATP synthase subunit c.